We begin with the raw amino-acid sequence, 243 residues long: MGQKVNPISNRLGIIRGWDSNWYGGNDYGDSLLEDSKIRKYLNARLAKASVSRIVIERTLKLVTITVCTARPGIIIGKGGQEVDKLKEELKKVTDKDIQINIFEVKRPELDAVIVANNIARQVEGKIAYRRAIKMAIANTMRMGAEGIKIQISGRLNGAEMARSEMYKEGRTPLHTFRADIDYCHAEALTKVGLLGIKVWICRGEVFGKKELAPNFTQSKESGRGNNGGNNGGKNFKRKKNNR.

The KH type-2 domain maps to 38–106; that stretch reads IRKYLNARLA…DIQINIFEVK (69 aa). The tract at residues 214–243 is disordered; the sequence is PNFTQSKESGRGNNGGNNGGKNFKRKKNNR.

Belongs to the universal ribosomal protein uS3 family. As to quaternary structure, part of the 30S ribosomal subunit. Forms a tight complex with proteins S10 and S14.

Its function is as follows. Binds the lower part of the 30S subunit head. Binds mRNA in the 70S ribosome, positioning it for translation. The sequence is that of Small ribosomal subunit protein uS3 from Bacteroides thetaiotaomicron (strain ATCC 29148 / DSM 2079 / JCM 5827 / CCUG 10774 / NCTC 10582 / VPI-5482 / E50).